A 218-amino-acid polypeptide reads, in one-letter code: Serine/threonine-protein phosphatase 2 (218 aa).

Residues D22, H24, D51, and N77 each contribute to the Mn(2+) site. The active-site Proton donor is the H78. H187 serves as a coordination point for Mn(2+).

Belongs to the PPP phosphatase family. PP-1 subfamily. Requires Mn(2+) as cofactor.

It carries out the reaction O-phospho-L-seryl-[protein] + H2O = L-seryl-[protein] + phosphate. The enzyme catalyses O-phospho-L-threonyl-[protein] + H2O = L-threonyl-[protein] + phosphate. With respect to regulation, inhibited by cadmium, copper, zinc when added activity but with less efficiency. Can hydrolyze phosphorylated Ser-, Thr- or Tyr-substrates in vitro. The natural substrate is unknown. This is Serine/threonine-protein phosphatase 2 (pphB) from Salmonella typhimurium (strain LT2 / SGSC1412 / ATCC 700720).